Consider the following 431-residue polypeptide: Glutamate-1-semialdehyde 2,1-aminomutase (431 aa).

Lysine 265 carries the post-translational modification N6-(pyridoxal phosphate)lysine.

It belongs to the class-III pyridoxal-phosphate-dependent aminotransferase family. HemL subfamily. As to quaternary structure, homodimer. Pyridoxal 5'-phosphate is required as a cofactor.

It is found in the cytoplasm. The enzyme catalyses (S)-4-amino-5-oxopentanoate = 5-aminolevulinate. Its pathway is porphyrin-containing compound metabolism; protoporphyrin-IX biosynthesis; 5-aminolevulinate from L-glutamyl-tRNA(Glu): step 2/2. This is Glutamate-1-semialdehyde 2,1-aminomutase from Vibrio atlanticus (strain LGP32) (Vibrio splendidus (strain Mel32)).